A 2270-amino-acid chain; its full sequence is Protein DOP1B (2270 aa).

3 disordered regions span residues 548–572 (METP…VEGE), 697–716 (LKQR…TEEE), and 1084–1145 (QEQD…DMPR). Residues 1095–1145 (ADTSTGHNDSDNTSSFTPSSVDLSSDQNYRDNTAGQVTHKNTGQQNMDMPR) are compositionally biased toward polar residues.

It belongs to the DOP1 family.

The protein resides in the golgi apparatus membrane. In terms of biological role, may be involved in protein traffic between late Golgi and early endosomes. In Xenopus laevis (African clawed frog), this protein is Protein DOP1B (dop1b).